The following is a 585-amino-acid chain: Complement component C8 alpha chain (585 aa).

The first 20 residues, 1–20 (MLVAAFFTLFLVTCQPAVTA), serve as a signal peptide directing secretion. A propeptide spanning residues 21 to 30 (QEKVNQRVNR) is cleaved from the precursor. Residues 38–91 (DCQLSSWSEWTDCFPCQDTKYRHRSLLQPNKFGGTICSGDIWDRASCYSPTACL) enclose the TSP type-1 1 domain. Intrachain disulfides connect C39/C74, C50/C84, C53/C90, C96/C108, C102/C121, C115/C130, and C140/C177. W44 carries C-linked (Man) tryptophan glycosylation. The LDL-receptor class A domain maps to 94–132 (AQCGQDFQCKETGRCLKRHLVCNGENDCLDGSDEDNCED). 6 residues coordinate Ca(2+): L113, N116, E118, D120, D126, and E127. An MACPF domain is found at 136-499 (TESDCAQYDP…QYLMEFNACR (364 aa)). 4 consecutive transmembrane segments (beta stranded) span residues 248-256 (AGVTISAGL), 259-266 (SPLLGTVG), 377-384 (GGFGEIQY), and 391-396 (AQGILS). C375 and C400 are disulfide-bonded. N438 carries N-linked (GlcNAc...) asparagine glycosylation. Cystine bridges form between C498-C545, C500-C516, C503-C518, and C520-C529. The EGF-like domain maps to 499 to 530 (RCGPCFNNGKPILEGTSCRCQCSLGLQGPACE). The TSP type-1 2 domain maps to 540–584 (DGHWSCWGSWSPCTAGTRERRRECNNPAPQNGGAPCPGWRVQTQA). W543, W546, and W549 each carry a C-linked (Man) tryptophan glycan. 2 disulfides stabilise this stretch: C552–C585 and C563–C575.

The protein belongs to the complement C6/C7/C8/C9 family. As to quaternary structure, heterotrimer of 3 chains: alpha (C8A), beta (C8B) and gamma (C8G); the alpha and gamma chains are disulfide bonded. Component of the membrane attack complex (MAC), composed of complement C5b, C6, C7, C8A, C8B, C8G and multiple copies of the pore-forming subunit C9.

It localises to the secreted. It is found in the target cell membrane. Its activity is regulated as follows. Membrane attack complex (MAC) assembly is inhibited by CD59, thereby protecting self-cells from damage during complement activation. CD59 acts by binding to the beta-haipins of C8 (C8A and C8B), forming an intermolecular beta-sheet that prevents incorporation of the multiple copies of C9 required for complete formation of the osmolytic pore. MAC assembly is also inhibited by clusterin (CLU) chaperones that inhibit polymerization of C9. Component of the membrane attack complex (MAC), a multiprotein complex activated by the complement cascade, which inserts into a target cell membrane and forms a pore, leading to target cell membrane rupture and cell lysis. The MAC is initiated by proteolytic cleavage of C5 into complement C5b in response to the classical, alternative, lectin and GZMK complement pathways. The complement pathways consist in a cascade of proteins that leads to phagocytosis and breakdown of pathogens and signaling that strengthens the adaptive immune system. C8A, together with C8B and C8G, inserts into the target membrane, but does not form pores by itself. During MAC assembly, associates with C5b, C6 and C7 to form the C5b8 intermediate complex that inserts into the target membrane and traverses the bilayer increasing membrane rigidity. In Oryctolagus cuniculus (Rabbit), this protein is Complement component C8 alpha chain (C8A).